The following is a 497-amino-acid chain: Endoglucanase 17 (497 aa).

The signal sequence occupies residues M1–G21. Catalysis depends on D77, which acts as the Nucleophile. The active site involves H406. The N-linked (GlcNAc...) asparagine glycan is linked to N451. Catalysis depends on residues D458 and E467.

Belongs to the glycosyl hydrolase 9 (cellulase E) family.

The protein resides in the secreted. The enzyme catalyses Endohydrolysis of (1-&gt;4)-beta-D-glucosidic linkages in cellulose, lichenin and cereal beta-D-glucans.. The protein is Endoglucanase 17 (GLU13) of Oryza sativa subsp. japonica (Rice).